We begin with the raw amino-acid sequence, 152 residues long: D-aminoacyl-tRNA deacylase (152 aa).

The Gly-cisPro motif, important for rejection of L-amino acids signature appears at 142–143 (GP).

The protein belongs to the DTD family. Homodimer.

Its subcellular location is the cytoplasm. The catalysed reaction is glycyl-tRNA(Ala) + H2O = tRNA(Ala) + glycine + H(+). It carries out the reaction a D-aminoacyl-tRNA + H2O = a tRNA + a D-alpha-amino acid + H(+). An aminoacyl-tRNA editing enzyme that deacylates mischarged D-aminoacyl-tRNAs. Also deacylates mischarged glycyl-tRNA(Ala), protecting cells against glycine mischarging by AlaRS. Acts via tRNA-based rather than protein-based catalysis; rejects L-amino acids rather than detecting D-amino acids in the active site. By recycling D-aminoacyl-tRNA to D-amino acids and free tRNA molecules, this enzyme counteracts the toxicity associated with the formation of D-aminoacyl-tRNA entities in vivo and helps enforce protein L-homochirality. The sequence is that of D-aminoacyl-tRNA deacylase from Paraburkholderia xenovorans (strain LB400).